Reading from the N-terminus, the 101-residue chain is Large ribosomal subunit protein bL21 (101 aa).

The protein belongs to the bacterial ribosomal protein bL21 family. As to quaternary structure, part of the 50S ribosomal subunit. Contacts protein L20.

Functionally, this protein binds to 23S rRNA in the presence of protein L20. The chain is Large ribosomal subunit protein bL21 from Corynebacterium glutamicum (strain R).